A 1225-amino-acid chain; its full sequence is NHS-like protein 2 (1225 aa).

9 disordered regions span residues 161–180 (TFRS…PQSA), 193–213 (QLSE…SLSL), 291–371 (NFSQ…ESMG), 466–510 (HMPE…TTDV), 543–632 (LSAQ…PEST), 670–766 (QGSS…KFPK), 812–1009 (KTNP…KKPS), 1042–1093 (DTKC…DKTA), and 1128–1203 (KEPG…KTTN). Polar residues-rich tracts occupy residues 291–315 (NFSQ…TSDI) and 339–350 (SLTSPVLRTPSS). S500 carries the post-translational modification Phosphoserine. Basic residues predominate over residues 552-568 (RRQRSKSISLRKAKKKP). S576 carries the phosphoserine modification. Residues 675–688 (SLASPSTSRATTPS) show a composition bias toward low complexity. A Phosphoserine modification is found at S691. Composition is skewed to polar residues over residues 710–730 (SPSS…SMSL) and 812–827 (KTNP…TQSD). The segment covering 841–851 (PEDDIESPEYA) has biased composition (acidic residues). The span at 852–867 (EEPRAEEVFTLPERKT) shows a compositional bias: basic and acidic residues. 2 stretches are compositionally biased toward polar residues: residues 939-968 (GEST…QPPQ) and 1054-1065 (SLGQRVTSTPQA). S1054 carries the phosphoserine modification. The span at 1082 to 1093 (TEEKSLISDKTA) shows a compositional bias: basic and acidic residues. Residues 1138 to 1155 (RTSSHSPIKNTAESPISE) show a composition bias toward polar residues. Positions 1156-1166 (STATAGSGSSA) are enriched in low complexity.

The protein belongs to the NHS family.

The sequence is that of NHS-like protein 2 from Homo sapiens (Human).